Here is a 342-residue protein sequence, read N- to C-terminus: Autoinducer 2 import system permease protein LsrC (342 aa).

Residues M1–A13 are Periplasmic-facing. A helical membrane pass occupies residues L14 to V34. The Cytoplasmic segment spans residues Q35–T38. A helical transmembrane segment spans residues M39–L59. Residues T60–S69 are Periplasmic-facing. Residues I70–V90 traverse the membrane as a helical segment. Over A91–C92 the chain is Cytoplasmic. The helical transmembrane segment at V93–L113 threads the bilayer. Residue K114 is a topological domain, periplasmic. The chain crosses the membrane as a helical span at residues I115 to W135. The Cytoplasmic portion of the chain corresponds to T136–P154. Residues L155–W175 traverse the membrane as a helical segment. At L176 to S212 the chain is on the periplasmic side. The chain crosses the membrane as a helical span at residues L213–P233. The Cytoplasmic segment spans residues N234 to G251. The chain crosses the membrane as a helical span at residues G252 to L272. The Periplasmic portion of the chain corresponds to T273–R283. Residues I284–D304 traverse the membrane as a helical segment. The Cytoplasmic portion of the chain corresponds to G305–A342.

The protein belongs to the binding-protein-dependent transport system permease family. AraH/RbsC subfamily. The complex is composed of two ATP-binding proteins (LsrA), two transmembrane proteins (LsrC and LsrD) and a solute-binding protein (LsrB).

The protein localises to the cell inner membrane. Functionally, part of the ABC transporter complex LsrABCD involved in autoinducer 2 (AI-2) import. Probably responsible for the translocation of the substrate across the membrane. This chain is Autoinducer 2 import system permease protein LsrC (lsrC), found in Escherichia coli O9:H4 (strain HS).